Reading from the N-terminus, the 585-residue chain is ATP-dependent lipid A-core flippase (585 aa).

5 helical membrane passes run 24-44 (LWKV…ASAA), 65-85 (LLVP…SFCG), 143-163 (ITVV…MIYV), 165-185 (WKLT…IGYV), and 253-273 (PIIQ…ALSP). The ABC transmembrane type-1 domain maps to 29–310 (ALAVLGNVIY…LTEVNAVIQR (282 aa)). In terms of domain architecture, ABC transporter spans 342–578 (LEFKSLGFAY…DGAYAALHKL (237 aa)). ATP is bound at residue 376-383 (GRSGSGKS).

It belongs to the ABC transporter superfamily. Lipid exporter (TC 3.A.1.106) family. In terms of assembly, homodimer.

The protein localises to the cell inner membrane. It carries out the reaction ATP + H2O + lipid A-core oligosaccharideSide 1 = ADP + phosphate + lipid A-core oligosaccharideSide 2.. Involved in lipopolysaccharide (LPS) biosynthesis. Translocates lipid A-core from the inner to the outer leaflet of the inner membrane. Transmembrane domains (TMD) form a pore in the inner membrane and the ATP-binding domain (NBD) is responsible for energy generation. The sequence is that of ATP-dependent lipid A-core flippase from Hahella chejuensis (strain KCTC 2396).